Consider the following 299-residue polypeptide: Very long chain fatty acid elongase 5 (299 aa).

An N-acetylmethionine modification is found at Met-1. 7 helical membrane-spanning segments follow: residues 26-46, 64-84, 112-132, 139-158, 168-187, 205-225, and 226-246; these read WFLLDNYIPTFICSVIYLLIV, ILVVYNLGLTLLSLYMFCELV, VLWWYYFSKLIEFMDTFFFIL, ITVLHVYHHASMLNIWWFVM, FGATLNSFIHVLMYSYYGLS, GQLLQFVLTIIQTSCGVIWPC, and TFPLGWLYFQIGYMISLIALF. The disordered stretch occupies residues 274–299; sequence MAAVNGHTNSFSPLENNVKPRKLRKD. Over residues 279–288 the composition is skewed to polar residues; that stretch reads GHTNSFSPLE. Phosphoserine is present on Ser-285.

Belongs to the ELO family. ELOVL5 subfamily. As to quaternary structure, interacts with TECR. In terms of tissue distribution, ubiquitous. Highly expressed in the adrenal gland and testis. Weakly expressed in prostate, lung and brain. Expressed in the cerebellum.

The protein resides in the endoplasmic reticulum membrane. The protein localises to the cell projection. Its subcellular location is the dendrite. It carries out the reaction a very-long-chain acyl-CoA + malonyl-CoA + H(+) = a very-long-chain 3-oxoacyl-CoA + CO2 + CoA. The catalysed reaction is (6Z,9Z,12Z)-octadecatrienoyl-CoA + malonyl-CoA + H(+) = (8Z,11Z,14Z)-3-oxoeicosatrienoyl-CoA + CO2 + CoA. It catalyses the reaction (9Z,12Z,15Z)-octadecatrienoyl-CoA + malonyl-CoA + H(+) = (11Z,14Z,17Z)-3-oxoeicosatrienoyl-CoA + CO2 + CoA. The enzyme catalyses (9Z)-hexadecenoyl-CoA + malonyl-CoA + H(+) = 3-oxo-(11Z)-octadecenoyl-CoA + CO2 + CoA. It carries out the reaction (9Z)-octadecenoyl-CoA + malonyl-CoA + H(+) = 3-oxo-(11Z)-eicosenoyl-CoA + CO2 + CoA. The catalysed reaction is (11Z)-octadecenoyl-CoA + malonyl-CoA + H(+) = 3-oxo-(13Z)-eicosenoyl-CoA + CO2 + CoA. It catalyses the reaction (9Z,12Z)-octadecadienoyl-CoA + malonyl-CoA + H(+) = (11Z,14Z)-3-oxoicosa-11,14-dienoyl-CoA + CO2 + CoA. The enzyme catalyses (6Z,9Z,12Z,15Z)-octadecatetraenoyl-CoA + malonyl-CoA + H(+) = (8Z,11Z,14Z,17Z)-3-oxoicosatetraenoyl-CoA + CO2 + CoA. It carries out the reaction (5Z,8Z,11Z,14Z)-eicosatetraenoyl-CoA + malonyl-CoA + H(+) = (7Z,10Z,13Z,16Z)-3-oxodocosatetraenoyl-CoA + CO2 + CoA. The catalysed reaction is (5Z,8Z,11Z,14Z,17Z)-eicosapentaenoyl-CoA + malonyl-CoA + H(+) = 3-oxo-(7Z,10Z,13Z,16Z,19Z)-docosapentaenoyl-CoA + CO2 + CoA. It functions in the pathway lipid metabolism; polyunsaturated fatty acid biosynthesis. Functionally, catalyzes the first and rate-limiting reaction of the four reactions that constitute the long-chain fatty acids elongation cycle. This endoplasmic reticulum-bound enzymatic process allows the addition of 2 carbons to the chain of long- and very long-chain fatty acids (VLCFAs) per cycle. Condensing enzyme that acts specifically toward polyunsaturated acyl-CoA with the higher activity toward C18:3(n-6) acyl-CoA. May participate in the production of monounsaturated and of polyunsaturated VLCFAs of different chain lengths that are involved in multiple biological processes as precursors of membrane lipids and lipid mediators. In conditions where the essential linoleic and alpha linoleic fatty acids are lacking it is also involved in the synthesis of Mead acid from oleic acid. The sequence is that of Very long chain fatty acid elongase 5 from Homo sapiens (Human).